A 361-amino-acid polypeptide reads, in one-letter code: Alanine racemase (361 aa).

K35 functions as the Proton acceptor; specific for D-alanine in the catalytic mechanism. Position 35 is an N6-(pyridoxal phosphate)lysine (K35). R130 contacts substrate. Catalysis depends on Y257, which acts as the Proton acceptor; specific for L-alanine. Residue M305 participates in substrate binding.

The protein belongs to the alanine racemase family. Requires pyridoxal 5'-phosphate as cofactor.

The catalysed reaction is L-alanine = D-alanine. The protein operates within amino-acid biosynthesis; D-alanine biosynthesis; D-alanine from L-alanine: step 1/1. Its function is as follows. Catalyzes the interconversion of L-alanine and D-alanine. May also act on other amino acids. The protein is Alanine racemase (alr) of Nitrosomonas eutropha (strain DSM 101675 / C91 / Nm57).